The following is a 217-amino-acid chain: 3,4-dihydroxy-2-butanone 4-phosphate synthase (217 aa).

D-ribulose 5-phosphate is bound by residues 37 to 38 (RE), Asp42, 150 to 154 (RQGHT), and Glu174. Residue Glu38 participates in Mg(2+) binding. His153 contributes to the Mg(2+) binding site.

Belongs to the DHBP synthase family. As to quaternary structure, homodimer. It depends on Mg(2+) as a cofactor. Mn(2+) serves as cofactor.

It catalyses the reaction D-ribulose 5-phosphate = (2S)-2-hydroxy-3-oxobutyl phosphate + formate + H(+). The protein operates within cofactor biosynthesis; riboflavin biosynthesis; 2-hydroxy-3-oxobutyl phosphate from D-ribulose 5-phosphate: step 1/1. Its function is as follows. Catalyzes the conversion of D-ribulose 5-phosphate to formate and 3,4-dihydroxy-2-butanone 4-phosphate. The polypeptide is 3,4-dihydroxy-2-butanone 4-phosphate synthase (Photorhabdus laumondii subsp. laumondii (strain DSM 15139 / CIP 105565 / TT01) (Photorhabdus luminescens subsp. laumondii)).